The following is a 205-amino-acid chain: Dephospho-CoA kinase (205 aa).

A DPCK domain is found at 4-203; sequence KIGITGGIGS…QKIHYLCSAK (200 aa). 12–17 is a binding site for ATP; sequence GSGKSV.

The protein belongs to the CoaE family.

The protein resides in the cytoplasm. The catalysed reaction is 3'-dephospho-CoA + ATP = ADP + CoA + H(+). It functions in the pathway cofactor biosynthesis; coenzyme A biosynthesis; CoA from (R)-pantothenate: step 5/5. Functionally, catalyzes the phosphorylation of the 3'-hydroxyl group of dephosphocoenzyme A to form coenzyme A. This chain is Dephospho-CoA kinase, found in Bacteroides fragilis (strain ATCC 25285 / DSM 2151 / CCUG 4856 / JCM 11019 / LMG 10263 / NCTC 9343 / Onslow / VPI 2553 / EN-2).